A 254-amino-acid polypeptide reads, in one-letter code: 5'-nucleotidase SurE (254 aa).

Asp8, Asp9, Ser38, and Asn91 together coordinate a divalent metal cation.

It belongs to the SurE nucleotidase family. The cofactor is a divalent metal cation.

It is found in the cytoplasm. The enzyme catalyses a ribonucleoside 5'-phosphate + H2O = a ribonucleoside + phosphate. Its function is as follows. Nucleotidase that shows phosphatase activity on nucleoside 5'-monophosphates. The protein is 5'-nucleotidase SurE of Anaeromyxobacter sp. (strain K).